A 212-amino-acid chain; its full sequence is Large ribosomal subunit protein bL25 (212 aa).

Residues 1–25 (MSQSTIHKIAVKKRTETGKNENNRL) form a disordered region. Basic and acidic residues predominate over residues 13–24 (KRTETGKNENNR).

The protein belongs to the bacterial ribosomal protein bL25 family. CTC subfamily. In terms of assembly, part of the 50S ribosomal subunit; part of the 5S rRNA/L5/L18/L25 subcomplex. Contacts the 5S rRNA. Binds to the 5S rRNA independently of L5 and L18.

This is one of the proteins that binds to the 5S RNA in the ribosome where it forms part of the central protuberance. The chain is Large ribosomal subunit protein bL25 from Leptospira borgpetersenii serovar Hardjo-bovis (strain JB197).